We begin with the raw amino-acid sequence, 396 residues long: 1-deoxy-D-xylulose 5-phosphate reductoisomerase (396 aa).

NADPH contacts are provided by T13, G14, S15, V16, and N127. Residue K128 participates in 1-deoxy-D-xylulose 5-phosphate binding. Residue E129 coordinates NADPH. Position 153 (D153) interacts with Mn(2+). Residues S154, E155, S184, and H207 each coordinate 1-deoxy-D-xylulose 5-phosphate. E155 serves as a coordination point for Mn(2+). An NADPH-binding site is contributed by G213. 1-deoxy-D-xylulose 5-phosphate contacts are provided by S220, N225, K226, and E229. E229 lines the Mn(2+) pocket.

It belongs to the DXR family. Mg(2+) serves as cofactor. It depends on Mn(2+) as a cofactor.

It carries out the reaction 2-C-methyl-D-erythritol 4-phosphate + NADP(+) = 1-deoxy-D-xylulose 5-phosphate + NADPH + H(+). The protein operates within isoprenoid biosynthesis; isopentenyl diphosphate biosynthesis via DXP pathway; isopentenyl diphosphate from 1-deoxy-D-xylulose 5-phosphate: step 1/6. In terms of biological role, catalyzes the NADPH-dependent rearrangement and reduction of 1-deoxy-D-xylulose-5-phosphate (DXP) to 2-C-methyl-D-erythritol 4-phosphate (MEP). This chain is 1-deoxy-D-xylulose 5-phosphate reductoisomerase, found in Pseudomonas fluorescens (strain SBW25).